Reading from the N-terminus, the 350-residue chain is Inactive ADP-ribosyltransferase arh2 (350 aa).

The protein belongs to the ADP-ribosylglycohydrolase family.

It is found in the cytoplasm. Its subcellular location is the myofibril. The protein localises to the sarcomere. Its function is as follows. Required for myofibril assembly and outgrowth of the cardiac chambers in the developing heart. Appears to be catalytically inactive, showing no activity against O-acetyl-ADP-ribose. The chain is Inactive ADP-ribosyltransferase arh2 (adprhl1) from Danio rerio (Zebrafish).